The following is a 224-amino-acid chain: PKHD-type hydroxylase KPN78578_12210 (224 aa).

Positions 77 to 176 (TISAPLFNRY…RQASFLWIQS (100 aa)) constitute a Fe2OG dioxygenase domain. His95, Asp97, and His157 together coordinate Fe cation. Arg167 lines the 2-oxoglutarate pocket.

Requires Fe(2+) as cofactor. L-ascorbate is required as a cofactor.

The sequence is that of PKHD-type hydroxylase KPN78578_12210 from Klebsiella pneumoniae subsp. pneumoniae (strain ATCC 700721 / MGH 78578).